The chain runs to 320 residues: tRNA pseudouridine synthase B (320 aa).

The Nucleophile role is filled by D48.

This sequence belongs to the pseudouridine synthase TruB family. Type 1 subfamily.

The enzyme catalyses uridine(55) in tRNA = pseudouridine(55) in tRNA. In terms of biological role, responsible for synthesis of pseudouridine from uracil-55 in the psi GC loop of transfer RNAs. The sequence is that of tRNA pseudouridine synthase B from Mycobacterium leprae (strain TN).